Consider the following 302-residue polypeptide: Digeranylgeranylglyceryl phosphate synthase (302 aa).

8 consecutive transmembrane segments (helical) span residues 21 to 41 (LVVAALTTLIGYGTVASIYGG), 43 to 63 (IVSSGYAYAALIVVLVAAGGY), 103 to 123 (IGLIIALVTCPNFIVFGFAVL), 144 to 164 (IVIAFNSASTIVFGALYASCM), 167 to 187 (GKVVLPSVALIPVLYAFLLVL), 218 to 238 (AYMASVAVLGLVVVLSPFPYI), 244 to 264 (MAYLILALVVDVLIAYSLAIL), and 282 to 302 (ARSALKLAFMVGALAFLAGLM).

Belongs to the UbiA prenyltransferase family. DGGGP synthase subfamily. Mg(2+) serves as cofactor.

The protein resides in the cell membrane. The catalysed reaction is sn-3-O-(geranylgeranyl)glycerol 1-phosphate + (2E,6E,10E)-geranylgeranyl diphosphate = 2,3-bis-O-(geranylgeranyl)-sn-glycerol 1-phosphate + diphosphate. It participates in membrane lipid metabolism; glycerophospholipid metabolism. Prenyltransferase that catalyzes the transfer of the geranylgeranyl moiety of geranylgeranyl diphosphate (GGPP) to the C2 hydroxyl of (S)-3-O-geranylgeranylglyceryl phosphate (GGGP). This reaction is the second ether-bond-formation step in the biosynthesis of archaeal membrane lipids. The polypeptide is Digeranylgeranylglyceryl phosphate synthase (Hyperthermus butylicus (strain DSM 5456 / JCM 9403 / PLM1-5)).